The sequence spans 247 residues: Sugar fermentation stimulation protein homolog (247 aa).

This sequence belongs to the SfsA family.

The protein is Sugar fermentation stimulation protein homolog of Aeromonas hydrophila subsp. hydrophila (strain ATCC 7966 / DSM 30187 / BCRC 13018 / CCUG 14551 / JCM 1027 / KCTC 2358 / NCIMB 9240 / NCTC 8049).